Reading from the N-terminus, the 382-residue chain is uncharacterized protein (382 aa).

This is an uncharacterized protein from Orgyia pseudotsugata multicapsid polyhedrosis virus (OpMNPV).